Reading from the N-terminus, the 371-residue chain is tRNA 2-selenouridine synthase (371 aa).

In terms of domain architecture, Rhodanese spans 14-137; sequence FLDDVPLIDL…MRRFLIDTLD (124 aa). The active-site S-selanylcysteine intermediate is C97.

The protein belongs to the SelU family. In terms of assembly, monomer.

The enzyme catalyses 5-methylaminomethyl-2-thiouridine(34) in tRNA + selenophosphate + (2E)-geranyl diphosphate + H2O + H(+) = 5-methylaminomethyl-2-selenouridine(34) in tRNA + (2E)-thiogeraniol + phosphate + diphosphate. The catalysed reaction is 5-methylaminomethyl-2-thiouridine(34) in tRNA + (2E)-geranyl diphosphate = 5-methylaminomethyl-S-(2E)-geranyl-thiouridine(34) in tRNA + diphosphate. It catalyses the reaction 5-methylaminomethyl-S-(2E)-geranyl-thiouridine(34) in tRNA + selenophosphate + H(+) = 5-methylaminomethyl-2-(Se-phospho)selenouridine(34) in tRNA + (2E)-thiogeraniol. It carries out the reaction 5-methylaminomethyl-2-(Se-phospho)selenouridine(34) in tRNA + H2O = 5-methylaminomethyl-2-selenouridine(34) in tRNA + phosphate. Its function is as follows. Involved in the post-transcriptional modification of the uridine at the wobble position (U34) of tRNA(Lys), tRNA(Glu) and tRNA(Gln). Catalyzes the conversion of 2-thiouridine (S2U-RNA) to 2-selenouridine (Se2U-RNA). Acts in a two-step process involving geranylation of 2-thiouridine (S2U) to S-geranyl-2-thiouridine (geS2U) and subsequent selenation of the latter derivative to 2-selenouridine (Se2U) in the tRNA chain. The chain is tRNA 2-selenouridine synthase from Aeromonas salmonicida (strain A449).